A 168-amino-acid chain; its full sequence is G/U mismatch-specific DNA glycosylase (168 aa).

The protein belongs to the uracil-DNA glycosylase (UDG) superfamily. TDG/mug family. Binds DNA as a monomer.

It is found in the cytoplasm. It carries out the reaction Specifically hydrolyzes mismatched double-stranded DNA and polynucleotides, releasing free uracil.. Excises ethenocytosine and uracil, which can arise by alkylation or deamination of cytosine, respectively, from the corresponding mispairs with guanine in ds-DNA. It is capable of hydrolyzing the carbon-nitrogen bond between the sugar-phosphate backbone of the DNA and the mispaired base. The complementary strand guanine functions in substrate recognition. Required for DNA damage lesion repair in stationary-phase cells. The chain is G/U mismatch-specific DNA glycosylase from Salmonella choleraesuis (strain SC-B67).